Reading from the N-terminus, the 249-residue chain is MDEERSSMLPTMAAGPNSILFAINIDNKDLNGQSKFAPTVSDLLKESTQNVTLLKESTQGVSSVFREITASSAISILIKPEQETDPLPVVSRNVSADAKCKKERKKKKQVTNIISFDDEEDEQNSGDMFKKTPGAGESSEDNSDHSSVNIMSAFESPFGPNSNGSQSSNSWKIDSLSLNREFGYQKLDVKSIDDEDVDENEDDVYGNSSGRKHRGHSESPEKNGAHSVTQAGVQWHDLSSLQPLPPGFK.

2 disordered regions span residues glutamine 109–tryptophan 171 and aspartate 188–lysine 249. A compositionally biased stretch (low complexity) spans serine 156–serine 170. Over residues aspartate 193–valine 204 the composition is skewed to acidic residues. Positions histidine 226–glutamine 242 are enriched in polar residues.

The protein belongs to the sorting nexin family.

In Homo sapiens (Human), this protein is Putative protein SNX29P2 (SNX29P2).